Reading from the N-terminus, the 506-residue chain is Secreted RxLR effector protein 134 (506 aa).

A signal peptide spans 1–19 (MQGAYCVAVALLIAASGQA). Positions 50–71 (RVLQVSHYPKDDLMLLAGNEER) match the RxLR-dEER motif.

Belongs to the RxLR effector family.

The protein localises to the secreted. Its subcellular location is the host nucleus. Secreted effector that completely suppresses the host cell death induced by cell death-inducing proteins. The polypeptide is Secreted RxLR effector protein 134 (Plasmopara viticola (Downy mildew of grapevine)).